The primary structure comprises 372 residues: Aminomethyltransferase (372 aa).

The protein belongs to the GcvT family. In terms of assembly, the glycine cleavage system is composed of four proteins: P, T, L and H.

The catalysed reaction is N(6)-[(R)-S(8)-aminomethyldihydrolipoyl]-L-lysyl-[protein] + (6S)-5,6,7,8-tetrahydrofolate = N(6)-[(R)-dihydrolipoyl]-L-lysyl-[protein] + (6R)-5,10-methylene-5,6,7,8-tetrahydrofolate + NH4(+). Its function is as follows. The glycine cleavage system catalyzes the degradation of glycine. This is Aminomethyltransferase from Synechococcus elongatus (strain ATCC 33912 / PCC 7942 / FACHB-805) (Anacystis nidulans R2).